The chain runs to 393 residues: Beta-1,4-galactosyltransferase 3 (393 aa).

Topologically, residues 1-10 (MLRRLLERPC) are cytoplasmic. The helical; Signal-anchor for type II membrane protein transmembrane segment at 11-31 (TLALLVGSQLAVMMYLSLGGF) threads the bilayer. Over 32 to 393 (RSLSALFGRD…ANHTALRGSH (362 aa)) the chain is Lumenal. Residue Asn-57 is glycosylated (N-linked (GlcNAc...) asparagine). Cys-77 and Cys-119 form a disulfide bridge. 130-134 (PHRAR) contacts UDP-alpha-D-galactose. The N-linked (GlcNAc...) asparagine glycan is linked to Asn-166. UDP-alpha-D-galactose-binding positions include 169–171 (FNR), 196–197 (VD), Tyr-226, and Trp-258. Residues Cys-190 and Cys-209 are joined by a disulfide bond. A Mn(2+)-binding site is contributed by Asp-197. 260–263 (GEDD) is an N-acetyl-D-glucosamine binding site. His-291 provides a ligand contact to Mn(2+). 291 to 293 (HRG) is a UDP-alpha-D-galactose binding site. Arg-303 provides a ligand contact to N-acetyl-D-glucosamine. Residues Asn-337 and Asn-385 are each glycosylated (N-linked (GlcNAc...) asparagine). The segment at 339–393 (TADIGTDPRGPRAPSGPRYPPGSSQAFRQEMLQRRPPARPGPPPTANHTALRGSH) is disordered.

The protein belongs to the glycosyltransferase 7 family. It depends on Mn(2+) as a cofactor.

Its subcellular location is the golgi apparatus. The protein localises to the golgi stack membrane. The catalysed reaction is an N-acetyl-beta-D-glucosaminyl derivative + UDP-alpha-D-galactose = a beta-D-galactosyl-(1-&gt;4)-N-acetyl-beta-D-glucosaminyl derivative + UDP + H(+). It carries out the reaction N-acetyl-D-glucosamine + UDP-alpha-D-galactose = beta-D-galactosyl-(1-&gt;4)-N-acetyl-D-glucosamine + UDP + H(+). The enzyme catalyses a beta-D-GlcNAc-(1-&gt;3)-beta-D-Gal-(1-&gt;4)-beta-D-Glc-(1&lt;-&gt;1)-Cer(d18:1(4E)) + UDP-alpha-D-galactose = a neolactoside nLc4Cer(d18:1(4E)) + UDP + H(+). It catalyses the reaction a beta-D-glucosylceramide + UDP-alpha-D-galactose = a beta-D-galactosyl-(1-&gt;4)-beta-D-glucosyl-(1&lt;-&gt;1)-ceramide + UDP + H(+). The catalysed reaction is a neolactoside IV(3)-beta-GlcNAc-nLc4Cer + UDP-alpha-D-galactose = a neolactoside nLc6Cer + UDP + H(+). Its pathway is protein modification; protein glycosylation. Functionally, responsible for the synthesis of complex-type N-linked oligosaccharides in many glycoproteins as well as the carbohydrate moieties of glycolipids. This Pongo abelii (Sumatran orangutan) protein is Beta-1,4-galactosyltransferase 3 (B4GALT3).